The chain runs to 385 residues: Elsinochromes biosynthesis cluster protein HP2 (385 aa).

The signal sequence occupies residues 1 to 22; sequence MVLLYILIMVALIPMYMTVVQD. The next 2 membrane-spanning stretches (helical) occupy residues 94–114 and 148–168; these read TVLSALLLTFVFFWRMLSMFD and FYGQALYFGIMCLYTAHIVLW. Asparagine 187 carries an N-linked (GlcNAc...) asparagine glycan. Residues 209–229 form a helical membrane-spanning segment; sequence SWTFGQIVPIVLLVSPLVAAF. Asparagine 248 is a glycosylation site (N-linked (GlcNAc...) asparagine). A run of 2 helical transmembrane segments spans residues 309–329 and 344–364; these read AILFWELHVLLAFMVIWLPLA and YYAFPAAVGTFWLTVVIAVPF.

Its subcellular location is the membrane. Part of the gene cluster that mediates the biosynthesis of elsinochromes, pigments consisting of at least four interconvertible tautomers (A, B, C and D) that have a core phenolic quinone to which various side chains are attached and which play an important role in fungal pathogenesis. The non-reducing polyketide synthase PKS1 was proposed to iteratively catalyze decarboxylation between acetyl-CoA and malonyl-CoA subunits for polyketide chain elongation. The released polyketide undergoes cyclization to form an aromatic ring, and proceeds via serial modification steps to produce the heptaketide back- bone of elsinochrome. As elsinochrome has a symmetrical structure, two identical heptaketides are fused to form a core 1,2-dihydrobenzo-perylene ring structure, which can then be successively modified to produce the various derivatives of elsinochrome. Some of these reactions may be cooperatively carried out, at least in part, by the products of RDT1, OXR1 and PKS1. PRF1, embedded within the elsinochrome cluster possibly functions to stabilize some of the biosynthetic enzymes required for elsinochrome production. As prefoldin is a hexamer containing 2 a and 4 b subunits, additional prefoldin subunits, whose coding genes may not immediately link to the elsinochrome biosynthetic gene cluster, are required to fulfill the chaperone function. In addition, no methyltransferase-coding gene exists within the biosynthetic gene cluster, even though elsinochrome has four methyl groups at positions C3, C7, C8 and C12. Apparently, the identified gene cluster does not contain the entire entourage of genes responsible for elsinochrome biosynthesis. Once elsinochrome is synthesized, it must be exported outside the fungal cells, which is probably accomplished by the ECT1 transporter, to avoid toxicity. In Elsinoe fawcettii (Citrus scab fungus), this protein is Elsinochromes biosynthesis cluster protein HP2.